The primary structure comprises 745 residues: uncharacterized protein (745 aa).

An HTH araC/xylS-type domain is found at 158-256 (NQVCDYIELH…HQTPKQYRGD (99 aa)). DNA-binding regions (H-T-H motif) lie at residues 175–196 (SELSEYVGWSESHLSKKFAESL) and 223–246 (ITDIALQNGFSSAASFARTFKHFT).

This is an uncharacterized protein from Staphylococcus aureus (strain MRSA252).